The chain runs to 906 residues: Translation initiation factor IF-2 (906 aa).

2 disordered regions span residues 134-250 (RQRN…GSHV) and 269-317 (HLSA…FERP). The segment covering 136–177 (RNLDEQQRLAESDRVRDEEIQRKRDEEQAAKDRAEAERKAAE) has biased composition (basic and acidic residues). Low complexity-rich tracts occupy residues 178–232 (EAAA…STPA) and 287–305 (GRPG…RGSN). One can recognise a tr-type G domain in the interval 405 to 574 (TRPPVVTIMG…SLQAEVLELK (170 aa)). Residues 414–421 (GHVDHGKT) form a G1 region. Residue 414–421 (GHVDHGKT) participates in GTP binding. Residues 439–443 (GITQH) form a G2 region. Residues 460–463 (DTPG) are G3. GTP contacts are provided by residues 460 to 464 (DTPGH) and 514 to 517 (NKID). The tract at residues 514–517 (NKID) is G4. The G5 stretch occupies residues 550–552 (SAK).

This sequence belongs to the TRAFAC class translation factor GTPase superfamily. Classic translation factor GTPase family. IF-2 subfamily.

The protein resides in the cytoplasm. Functionally, one of the essential components for the initiation of protein synthesis. Protects formylmethionyl-tRNA from spontaneous hydrolysis and promotes its binding to the 30S ribosomal subunits. Also involved in the hydrolysis of GTP during the formation of the 70S ribosomal complex. The protein is Translation initiation factor IF-2 of Xanthomonas oryzae pv. oryzae (strain MAFF 311018).